A 1409-amino-acid polypeptide reads, in one-letter code: Receptor-type tyrosine-protein phosphatase (1409 aa).

Residues 1 to 22 (MRINRWIWWATVILLYLRTGLA) form the signal peptide. The Extracellular portion of the chain corresponds to 23 to 712 (ADFFRSSEEN…LLDTESSSSG (690 aa)). The segment at 32-53 (NDRKSSDDLDNFNSTKIEPDKP) is disordered. The Ig-like C2-type domain maps to 159-267 (PTKCDKRDLA…TASASDLDVT (109 aa)). Cys189 and Cys255 are joined by a disulfide. Fibronectin type-III domains are found at residues 276 to 366 (APRQ…TKQK) and 372 to 502 (KEED…AQPD). Residues 713-733 (FGIFMKIILPFLLFLAFATGV) traverse the membrane as a helical segment. Residues 734-1409 (TMFFVNRKGH…LADYISKTYR (676 aa)) are Cytoplasmic-facing. 2 Tyrosine-protein phosphatase domains span residues 793-1072 (FAQE…LAEW) and 1135-1403 (LEEE…LADY). Catalysis depends on phosphocysteine intermediate residues Cys1013 and Cys1344.

It belongs to the protein-tyrosine phosphatase family. Receptor class 2A subfamily. Expressed in muscles, hypodermis and a subset of neurons. Expressed in the AVA neurons, with high expression in the anterior half of the preanal ganglion where AVA neurons contact the PHB neurons.

Its subcellular location is the cell membrane. It is found in the synapse. It carries out the reaction O-phospho-L-tyrosyl-[protein] + H2O = L-tyrosyl-[protein] + phosphate. In terms of biological role, possesses an intrinsic protein tyrosine phosphatase (PTPase) activity. Regulates egl-15 activity which is required for hypodermis-mediated fluid homeostasis and protein degradation in muscle. During the formation of neuromuscular junctions at the larval stage, negatively regulates membrane protrusion from body wall muscles. Plays a role in nicotinic acetylcholine receptor (nAChR)-mediated sensitivity to nicotine. Regulates synaptic levels of nAchR subunit lev-1 in the nerve cord. Promotes the outgrowth of the quaternary dendritic branches of the PVD sensory neurons. In parallel to the sax-7/mnr-1 pathway, also controls the extension of the PVD primary branches. Acts in the netrin/DCC pathway to mediate the formation of synapses between the AVA interneurons and the PHB sensory neurons. Also required for the formation of synapses between the AVA interneurons and the VA10 motor neurons. This chain is Receptor-type tyrosine-protein phosphatase, found in Caenorhabditis elegans.